The primary structure comprises 117 residues: MDKKSARIRRATRARRKLKELGATRLVVHRTPRHIYAQVIAPNGSEVLVAASTVEKAITEQLKYTGNKDAAAAVGKAVAERALEKGIKVVSFDRSGFQYHGRVQALADAAREAGLQF.

This sequence belongs to the universal ribosomal protein uL18 family. Part of the 50S ribosomal subunit; part of the 5S rRNA/L5/L18/L25 subcomplex. Contacts the 5S and 23S rRNAs.

Its function is as follows. This is one of the proteins that bind and probably mediate the attachment of the 5S RNA into the large ribosomal subunit, where it forms part of the central protuberance. The protein is Large ribosomal subunit protein uL18 of Enterobacter sp. (strain 638).